The following is a 319-amino-acid chain: Aminoimidazole riboside kinase (319 aa).

The 5-amino-1-(beta-D-ribosyl)imidazole site is built by D16, G31, and Y101. 158-160 serves as a coordination point for ATP; it reads DVN. R162 provides a ligand contact to 5-amino-1-(beta-D-ribosyl)imidazole. Residues A180, A181, and A183 each contribute to the K(+) site. ATP is bound by residues K187 and E192. G213 lines the K(+) pocket. 220–225 contributes to the ATP binding site; the sequence is SLGADG. Residues D246 and T248 each contribute to the K(+) site. D252 lines the 5-amino-1-(beta-D-ribosyl)imidazole pocket. D252 serves as the catalytic Proton acceptor. N281 provides a ligand contact to ATP. Positions 287, 290, and 292 each coordinate K(+).

Belongs to the carbohydrate kinase PfkB family. Homodimer.

The catalysed reaction is 5-amino-1-(beta-D-ribosyl)imidazole + ATP = 5-amino-1-(5-phospho-beta-D-ribosyl)imidazole + ADP + H(+). Potassium may regulate kinase activity. Functionally, phosphorylates 5-amino-1-(beta-D-ribosyl)imidazole (AIRs) to form 5-amino-1-(5-phospho-beta-D-ribosyl)imidazole (AIR), an important intermediate in the purine and thiamine biosynthetic pathways. It allows the use of exogenous aminoimidazole riboside (AIRs) to satisfy the cellular requirement for purines and thiamine. This chain is Aminoimidazole riboside kinase, found in Salmonella typhimurium (strain LT2 / SGSC1412 / ATCC 700720).